Consider the following 260-residue polypeptide: Uroplakin-1b (260 aa).

Residues 1–15 (MAKDDSTVRCFQGLL) are Cytoplasmic-facing. Residues 16-36 (IFGHVIVGMCGIALTAECIFF) form a helical membrane-spanning segment. The Extracellular segment spans residues 37-59 (VSDQHSLYPLLEATNNDDIFGAA). Residues 60–80 (WIGMFVGICLFCLSVLAIVGI) form a helical membrane-spanning segment. The Cytoplasmic portion of the chain corresponds to 81–86 (MKSNRK). The helical transmembrane segment at 87–107 (ILLAYFIMMFIVYGFEVASCI) threads the bilayer. Topologically, residues 108 to 229 (TAATQRDFFT…ELISGPMDRH (122 aa)) are extracellular. Residues 230–250 (AWGVAWFGFAILCWTFWVLLG) traverse the membrane as a helical segment. The Cytoplasmic portion of the chain corresponds to 251–260 (TMFYWSRIEY).

Belongs to the tetraspanin (TM4SF) family. In terms of assembly, heterodimer with uroplakin-3A (UPK3A) or uroplakin-3B (UPK3B). N-glycosylated with high-mannose oligosaccharides. As to expression, bladder epithelium.

The protein localises to the membrane. Functionally, component of the asymmetric unit membrane (AUM); a highly specialized biomembrane elaborated by terminally differentiated urothelial cells. May play an important role in normal bladder epithelial physiology, possibly in regulating membrane permeability of superficial umbrella cells or in stabilizing the apical membrane through AUM/cytoskeletal interactions. The protein is Uroplakin-1b (Upk1b) of Mus musculus (Mouse).